Reading from the N-terminus, the 145-residue chain is Ventricular natriuretic peptide (145 aa).

Positions 1 to 24 are cleaved as a signal peptide; it reads MRMGKIAVGYGFLLLLVFQLGVRA. Cys-117 and Cys-133 are disulfide-bonded.

Belongs to the natriuretic peptide family. As to expression, heart atrium and ventricle, and to a very low extent in brain.

The protein localises to the secreted. In terms of biological role, exhibits natriuretic and vasodepressor activity. The protein is Ventricular natriuretic peptide (vnp) of Acipenser transmontanus (White sturgeon).